A 238-amino-acid polypeptide reads, in one-letter code: tRNA (guanine-N(7)-)-methyltransferase (238 aa).

S-adenosyl-L-methionine-binding residues include E68, E93, D121, and D143. D143 is a catalytic residue. Substrate contacts are provided by residues K147, D179, and 216–219 (TRYE).

It belongs to the class I-like SAM-binding methyltransferase superfamily. TrmB family.

It catalyses the reaction guanosine(46) in tRNA + S-adenosyl-L-methionine = N(7)-methylguanosine(46) in tRNA + S-adenosyl-L-homocysteine. Its pathway is tRNA modification; N(7)-methylguanine-tRNA biosynthesis. Catalyzes the formation of N(7)-methylguanine at position 46 (m7G46) in tRNA. The polypeptide is tRNA (guanine-N(7)-)-methyltransferase (Paramagnetospirillum magneticum (strain ATCC 700264 / AMB-1) (Magnetospirillum magneticum)).